A 257-amino-acid chain; its full sequence is uncharacterized protein (257 aa).

6 helical membrane-spanning segments follow: residues 5–25, 29–49, 53–73, 146–166, 180–200, and 216–236; these read FLYFITKSISYALFMVLIVTF, LALVGLFLPGIVLMSILGTLI, TLSFYPAWIVGIIGCMCGDWI, LGCILWPPIYFLPGIFTGIAI, IQFLAAILLIWLGIFLLWKLW, and VNLCLLLTISLSAGITIMIYI.

The protein belongs to the DedA family.

It is found in the cell membrane. This is an uncharacterized protein from Buchnera aphidicola subsp. Baizongia pistaciae (strain Bp).